We begin with the raw amino-acid sequence, 370 residues long: G-protein coupled receptor homolog K2 (370 aa).

Topologically, residues 1 to 61 are extracellular; it reads MTSPTNSTML…CTFLEDTKYH (61 aa). N-linked (GlcNAc...) asparagine; by host glycans are attached at residues N6 and N51. A helical membrane pass occupies residues 62–82; that stretch reads IIVIHIILFLLGSIGNIFVVS. Residues 83–94 are Cytoplasmic-facing; it reads LIAFKRNKSITD. A helical membrane pass occupies residues 95–115; that stretch reads IYILNLSMSDCIFVFQIPFIV. The Extracellular segment spans residues 116–131; that stretch reads YSKLDQWIFGNILCKI. Residues 132-152 form a helical membrane-spanning segment; the sequence is MSVLYYVGFFSNMFIITLMSI. Residues 153–171 lie on the Cytoplasmic side of the membrane; the sequence is DRYFAIVHPIKRQPYRTKR. The helical transmembrane segment at 172–192 threads the bilayer; that stretch reads IGILMCCSAWLLSLILSSPVS. Residues 193 to 223 lie on the Extracellular side of the membrane; the sequence is KLYENIPHMSKDIYQCTLTNENDSIIAFIKR. Residues 224–244 form a helical membrane-spanning segment; sequence LMQIEITILGFLIPIIIFVYC. The Cytoplasmic segment spans residues 245-265; sequence YYRIFTTVVRLRNRRKYKSIK. The chain crosses the membrane as a helical span at residues 266-286; that stretch reads IVLMIVVCSLICWIPLYIVLM. The Extracellular portion of the chain corresponds to 287–300; sequence IATIVSLYTSNIFR. The helical transmembrane segment at 301–321 threads the bilayer; that stretch reads HLCLYLNLAYAITFSETISLA. The Cytoplasmic portion of the chain corresponds to 322–370; it reads RCCINPIIYTLIGEHVRSRISSICSCIYRDNRIRKKLFSRKSSSSSNII.

This sequence belongs to the G-protein coupled receptor 1 family.

The protein resides in the host cell membrane. Putative chemokine receptor. In Sus scrofa (Pig), this protein is G-protein coupled receptor homolog K2.